Consider the following 29-residue polypeptide: Beta-theraphotoxin-Gr1a (29 aa).

3 disulfides stabilise this stretch: Cys2/Cys16, Cys9/Cys21, and Cys15/Cys25.

Belongs to the neurotoxin 30 (phrixotoxin) family. Expressed by the venom gland.

It localises to the secreted. In terms of biological role, inhibits voltage-gated sodium channels Nav1.1/SCN1A (IC(50)=630 nM), Nav1.2/SCN2A (IC(50)=230 nM), Nav1.3/SCN3A (IC(50)=770 nM), Nav1.4/SCN4A (IC(50)=1290 nM), Nav1.6/SCN8A (IC(50)=630 nM), Nav1.7/SCN9A (IC(50)=15.3-1000 nM) and potassium channels Kv11.1/KCNH2 (IC(50)=4.2 uM). This chain is Beta-theraphotoxin-Gr1a, found in Grammostola rosea (Chilean rose tarantula).